We begin with the raw amino-acid sequence, 205 residues long: Large ribosomal subunit protein uL4 (205 aa).

The segment at 65 to 99 is disordered; it reads RQKGTGGARHGSRKSPTFRHGGVYKGPTPRSHGHD.

It belongs to the universal ribosomal protein uL4 family. Part of the 50S ribosomal subunit.

Functionally, one of the primary rRNA binding proteins, this protein initially binds near the 5'-end of the 23S rRNA. It is important during the early stages of 50S assembly. It makes multiple contacts with different domains of the 23S rRNA in the assembled 50S subunit and ribosome. In terms of biological role, forms part of the polypeptide exit tunnel. This is Large ribosomal subunit protein uL4 from Ruegeria pomeroyi (strain ATCC 700808 / DSM 15171 / DSS-3) (Silicibacter pomeroyi).